The sequence spans 309 residues: MEAARTAVLRVKRKRSAEPAEALVLACKRLRSDAVESAAQKTSEGLERAAENNVFHLVATVCSQEEPVQPLLREVLRPSRDSQQRVRRNLRASAREVRQEGRYRVLSSRRSLGTTSSGQESEYTPGNPEAAGNSGFQLLDLVHEEGEPEAASAGSCKTSDPDVILCNSVELIRERLTVSEDGPGVRRQEEQKHDDYVYDIYYLETATPGWIENILSVQPYSQEWELVNDDQEPEDIYDDEDDENSENNWRNEYPEEESSDGDEDSRGSADYNSLSEEERGSSRQRMWSKYPLDVQKEFGYDSPHDLDSD.

Disordered stretches follow at residues 101-134 and 233-287; these read GRYR…AGNS and PEDI…QRMW. Over residues 106–118 the composition is skewed to low complexity; that stretch reads LSSRRSLGTTSSG. Acidic residues-rich tracts occupy residues 233–245 and 254–263; these read PEDI…DENS and PEEESSDGDE. Phosphoserine is present on residues S302 and S308.

Belongs to the IWR1/SLC7A6OS family.

The protein localises to the cytoplasm. Its subcellular location is the nucleus. Its function is as follows. Directs RNA polymerase II nuclear import. This is Probable RNA polymerase II nuclear localization protein SLC7A6OS (SLC7A6OS) from Homo sapiens (Human).